The chain runs to 204 residues: Protein phosphatase 1 regulatory subunit 1B (204 aa).

Methionine 1 is subject to N-acetylmethionine. A disordered region spans residues 1 to 204 (MDPKDRKKIQ…QRPSPSEPGT (204 aa)). Threonine 34 is subject to Phosphothreonine; by PKA. The segment covering 41 to 63 (LSEHSSPEEEASPHQRASGEGHH) has biased composition (basic and acidic residues). Residues serine 45 and serine 46 each carry the phosphoserine modification. Threonine 75 bears the Phosphothreonine; by CDK5 mark. Residues 89–100 (HLQSISNLNENQ) show a composition bias toward polar residues. The residue at position 102 (serine 102) is a Phosphoserine. A compositionally biased stretch (basic and acidic residues) spans 109-118 (GELRELGYPR). Acidic residues-rich tracts occupy residues 119–138 (EEDE…EDSQ) and 170–183 (DESE…DQVE). Phosphoserine is present on serine 137. Serine 198 is subject to Phosphoserine.

It belongs to the protein phosphatase inhibitor 1 family. In terms of processing, dopamine- and cyclic AMP-regulated neuronal phosphoprotein. Phosphorylation of Thr-34 is required for activity.

It localises to the cytoplasm. Functionally, inhibitor of protein-phosphatase 1. In Homo sapiens (Human), this protein is Protein phosphatase 1 regulatory subunit 1B (PPP1R1B).